The chain runs to 862 residues: Phosphofurin acidic cluster sorting protein 2 (862 aa).

Disordered stretches follow at residues H151 to M215, L263 to Q436, and S658 to V713. Residues L263 to G272 are compositionally biased toward low complexity. A compositionally biased stretch (basic and acidic residues) spans S313–R328. A compositionally biased stretch (polar residues) spans G332–V344. S361, S387, S424, S662, and S665 each carry phosphoserine. Composition is skewed to low complexity over residues S658 to S693 and P700 to S710.

It belongs to the PACS family. Interacts with BID and PKD2. Interacts with SIRT1. Interacts with HDAC1. Interacts with TRPV1. Interacts with WDR37.

The protein resides in the endoplasmic reticulum. It localises to the mitochondrion. Multifunctional sorting protein that controls the endoplasmic reticulum (ER)-mitochondria communication, including the apposition of mitochondria with the ER and ER homeostasis. In addition, in response to apoptotic inducer, translocates BIB to mitochondria, which initiates a sequence of events including the formation of mitochondrial truncated BID, the release of cytochrome c, the activation of caspase-3 thereby causing cell death. May also involved in ion channel trafficking, directing acidic cluster-containing ion channels to distinct subcellular compartments. The chain is Phosphofurin acidic cluster sorting protein 2 (Pacs2) from Mus musculus (Mouse).